A 102-amino-acid chain; its full sequence is Glycoprotein 24A (102 aa).

It belongs to the csb family. In terms of processing, O-glycosylated.

It localises to the cell surface. Its function is as follows. Cell-cell adhesion during early development. The polypeptide is Glycoprotein 24A (csbA) (Dictyostelium discoideum (Social amoeba)).